The sequence spans 569 residues: Santalene synthase (569 aa).

4 residues coordinate (2E)-geranyl diphosphate: arginine 284, aspartate 321, aspartate 325, and arginine 460. Residues aspartate 321 and aspartate 325 each coordinate Mg(2+). A DDXXD motif motif is present at residues aspartate 321–aspartate 325. Asparagine 463, threonine 467, and glutamate 471 together coordinate Mg(2+).

The protein belongs to the terpene synthase family. Tpsb subfamily. Requires Mg(2+) as cofactor. Mn(2+) serves as cofactor.

The enzyme catalyses (2E,6E)-farnesyl diphosphate = (1S,5S,6R)-alpha-bergamotene + diphosphate. The catalysed reaction is (2E,6E)-farnesyl diphosphate = (+)-alpha-santalene + diphosphate. It catalyses the reaction (2E,6E)-farnesyl diphosphate = (-)-beta-santalene + diphosphate. Functionally, catalyzes a mixture of sesquiterpenoids from (2E,6E)-farnesyl diphosphate in fragrance biosynthesis. Catalyzes the formation of alpha-santalene, beta-santalene, epi-beta-santalene and exo-alpha-bergamotene, as well as traces of alpha-farnesene and beta-farnesene. Also acts with (Z,Z)-farnesyl diphosphate isomer, producing alpha-endo-bergamotene, alpha-santalene, (Z)-beta-farnesene, epi-beta-santalene, and beta-santalene. The protein is Santalene synthase of Santalum album (White sandalwood).